Here is a 245-residue protein sequence, read N- to C-terminus: tRNA1(Val) (adenine(37)-N6)-methyltransferase (245 aa).

This sequence belongs to the methyltransferase superfamily. tRNA (adenine-N(6)-)-methyltransferase family.

The protein resides in the cytoplasm. It catalyses the reaction adenosine(37) in tRNA1(Val) + S-adenosyl-L-methionine = N(6)-methyladenosine(37) in tRNA1(Val) + S-adenosyl-L-homocysteine + H(+). In terms of biological role, specifically methylates the adenine in position 37 of tRNA(1)(Val) (anticodon cmo5UAC). This chain is tRNA1(Val) (adenine(37)-N6)-methyltransferase, found in Escherichia fergusonii (strain ATCC 35469 / DSM 13698 / CCUG 18766 / IAM 14443 / JCM 21226 / LMG 7866 / NBRC 102419 / NCTC 12128 / CDC 0568-73).